Consider the following 2465-residue polypeptide: Protein DOP1A (2465 aa).

3 disordered regions span residues 559-600 (PSGQ…SSES), 625-646 (GAAA…TVGS), and 705-733 (TEHQ…KEKN). Residues 633-646 (STSSETETASTVGS) show a composition bias toward low complexity. Positions 707-733 (HQGDLGREQGETSKWDRNSQGDVKEKN) are enriched in basic and acidic residues. Ser-1266 is subject to Phosphoserine. Composition is skewed to basic and acidic residues over residues 1282-1291 (EKETIVKESG) and 1305-1315 (KKDDDKKKSSN). The interval 1282–1315 (EKETIVKESGKQPGAKPKVKLARKKDDDKKKSSN) is disordered.

The protein belongs to the DOP1 family.

Its subcellular location is the golgi apparatus membrane. Functionally, may be involved in protein traffic between late Golgi and early endosomes. The polypeptide is Protein DOP1A (Homo sapiens (Human)).